Reading from the N-terminus, the 1292-residue chain is Calcium-transporting ATPase 2 (1292 aa).

The segment at 1-105 is disordered; it reads MPTYNDDDDS…EQASSKSSTS (105 aa). Residues 1 to 236 lie on the Cytoplasmic side of the membrane; sequence MPTYNDDDDS…RLMLEAFKDK (236 aa). Polar residues predominate over residues 23–41; that stretch reads KPSSSQFLGVPSSNYNQRE. The span at 44 to 60 shows a compositional bias: low complexity; the sequence is SRSGSSTISREPSSSGT. Residues 68-78 show a composition bias toward basic and acidic residues; it reads DSMKESYDKNK. A helical transmembrane segment spans residues 237–257; sequence VLILLSIAAVVSLALGLYQTF. Residues 258–273 lie on the Vacuolar side of the membrane; it reads GQPPTLDPITGKPEPR. Residues 274–294 traverse the membrane as a helical segment; that stretch reads VEWVEGVAIMAAIVIVVTVGG. Residues 295–448 lie on the Cytoplasmic side of the membrane; the sequence is VNDWQKELQF…QLRLSRVADA (154 aa). The chain crosses the membrane as a helical span at residues 449–469; sequence IAKLGGAASALLFIVLLIEFL. Residues 470–488 lie on the Vacuolar side of the membrane; that stretch reads VRLKSNDSSSKNKGQEFLQ. A helical transmembrane segment spans residues 489-509; the sequence is ILIVSVTLLVVAVPEGLPLAV. Ca(2+) contacts are provided by valine 498 and glutamate 503. Over 510–938 the chain is Cytoplasmic; the sequence is TLALAFATNR…GRTVNDAVKK (429 aa). Aspartate 545 (4-aspartylphosphate intermediate) is an active-site residue. The Mg(2+) site is built by aspartate 545 and threonine 547. ATP is bound by residues threonine 547, glutamate 638, lysine 691, arginine 736, 807–809, arginine 856, and lysine 862; that span reads TGD. Aspartate 881 is a Mg(2+) binding site. Asparagine 884 serves as a coordination point for ATP. The chain crosses the membrane as a helical span at residues 939–959; it reads FLQFQITVNITAVFLTIISAV. Asparagine 947 contacts Ca(2+). Topologically, residues 960–966 are vacuolar; that stretch reads ASTDQSS. A helical membrane pass occupies residues 967-987; it reads VLTAVQLLWVNLIMDTLAALA. Asparagine 977 and aspartate 981 together coordinate Ca(2+). Residues 988–1016 are Cytoplasmic-facing; sequence LATDPPTPEVLKRKPEKPGASLFTFDMWK. A helical transmembrane segment spans residues 1017–1037; it reads MIICQSMYQLAVTLVLHFAGN. Residues 1038–1084 lie on the Vacuolar side of the membrane; it reads SIFHYPSNTADMNTIVFNTFVWLQLFNEINNRRLDNKLNIFERINHN. A helical transmembrane segment spans residues 1085-1105; the sequence is FLFIAIFVIVAGIQVIIVFFG. At 1106 to 1115 the chain is on the cytoplasmic side; it reads GAAFSVKRID. The chain crosses the membrane as a helical span at residues 1116–1136; that stretch reads GKGWAISIVFGVISIPLGALI. Residues 1137–1292 lie on the Vacuolar side of the membrane; it reads RCVPNNFLRK…ALDKKSSNVH (156 aa).

Belongs to the cation transport ATPase (P-type) (TC 3.A.3) family.

It is found in the vacuole membrane. It carries out the reaction Ca(2+)(in) + ATP + H2O = Ca(2+)(out) + ADP + phosphate + H(+). Functionally, this magnesium-dependent enzyme catalyzes the hydrolysis of ATP coupled with the transport of calcium. Transports the calcium to the vacuole and participates in the control of the cytosolic free calcium. This is Calcium-transporting ATPase 2 (pmc1) from Schizosaccharomyces pombe (strain 972 / ATCC 24843) (Fission yeast).